The primary structure comprises 390 residues: Probable tRNA pseudouridine synthase D 2 (390 aa).

Catalysis depends on Asp93, which acts as the Nucleophile. The 188-residue stretch at Tyr166–Pro353 folds into the TRUD domain.

It belongs to the pseudouridine synthase TruD family.

The enzyme catalyses uridine(13) in tRNA = pseudouridine(13) in tRNA. Could be responsible for synthesis of pseudouridine from uracil-13 in transfer RNAs. This is Probable tRNA pseudouridine synthase D 2 from Methanococcus maripaludis (strain DSM 14266 / JCM 13030 / NBRC 101832 / S2 / LL).